The primary structure comprises 476 residues: Ankyrin repeat, SAM and basic leucine zipper domain-containing protein 1 (476 aa).

Residues S18 and S21 each carry the phosphoserine modification. ANK repeat units follow at residues 46 to 75, 79 to 108, 111 to 145, 149 to 178, 182 to 211, and 215 to 244; these read EKNE…SIDS, YGWT…NASF, DKQT…DPNV, RLMT…EVNT, NGYT…DKML, and DGKT…PLEG. One can recognise an SAM domain in the interval 273–335; the sequence is SYAAFEDLEI…KILAALKELE (63 aa).

In terms of assembly, interacts with DDX4, PIWIL1, RANBP9 and TDRD1.

The protein resides in the cytoplasm. In terms of biological role, plays a central role during spermatogenesis by repressing transposable elements and preventing their mobilization, which is essential for the germline integrity. Acts via the piRNA metabolic process, which mediates the repression of transposable elements during meiosis by forming complexes composed of piRNAs and Piwi proteins and governs the methylation and subsequent repression of transposons. Its association with pi-bodies suggests a participation in the primary piRNAs metabolic process. Required prior to the pachytene stage to facilitate the production of multiple types of piRNAs, including those associated with repeats involved in the regulation of retrotransposons. May act by mediating protein-protein interactions during germ cell maturation. The chain is Ankyrin repeat, SAM and basic leucine zipper domain-containing protein 1 (ASZ1) from Dasypus novemcinctus (Nine-banded armadillo).